The sequence spans 505 residues: Protein disulfide-isomerase A3 (505 aa).

Residues 1-24 (MRLRRLALFPGVALLLAAARLAAA) form the signal peptide. Residues 25–133 (SDVLELTDDN…IVSHLKKQAG (109 aa)) form the Thioredoxin 1 domain. Active-site nucleophile residues include Cys57 and Cys60. The cysteines at positions 57 and 60 are disulfide-linked. Residue Lys61 is modified to N6-methyllysine. Cys85 and Cys92 are oxidised to a cystine. Lys129 carries the N6-succinyllysine modification. Lys152 is subject to N6-acetyllysine. Lys218 is subject to N6-succinyllysine. The residue at position 252 (Lys252) is an N6-acetyllysine. Thr319 is modified (phosphothreonine). The 143-residue stretch at 343–485 (SRDGKALERF…FISYLQREAT (143 aa)) folds into the Thioredoxin 2 domain. Lys362 bears the N6-acetyllysine mark. Catalysis depends on nucleophile residues Cys406 and Cys409. Cys406 and Cys409 are oxidised to a cystine. Positions 484 to 505 (ATNPPVIQEEKPKKKKKAQEDL) are disordered. Residues 491 to 505 (QEEKPKKKKKAQEDL) are compositionally biased toward basic and acidic residues. Position 494 is an N6-acetyllysine (Lys494). The Prevents secretion from ER motif lies at 502 to 505 (QEDL).

Part of the major histocompatibility complex class I (MHC I) peptide loading complex composed of TAP1, TAP2, B2M, MHC heavy chain, TAPBP, PDIA3, and CALR. Interacts with ERP27 and CANX. Interacts with SERPINA2 and with the S and Z variants of SERPINA1. Interacts with ATP2A2. Post-translationally, within the major histocompatibility complex class I (MHC I) peptide loading complex forms reversible disulfide-linked heterodimers with TAPBP as part of its protein folding chaperone activity. This is essential to assist the dynamic assembly of the MHC I complex with high affinity antigens in the endoplasmic reticulum. In terms of processing, phosphorylated. In terms of tissue distribution, detected in the flagellum and head region of spermatozoa (at protein level). Expressed in liver, stomach and colon (at protein level). Expressed in gastric parietal cells and chief cells (at protein level).

The protein localises to the endoplasmic reticulum. Its subcellular location is the endoplasmic reticulum lumen. It localises to the melanosome. The catalysed reaction is Catalyzes the rearrangement of -S-S- bonds in proteins.. With respect to regulation, association with calcitriol does not affect its enzymatic activity. Protein disulfide isomerase that catalyzes the formation, isomerization, and reduction or oxidation of disulfide bonds in client proteins and functions as a protein folding chaperone. Core component of the major histocompatibility complex class I (MHC I) peptide loading complex where it functions as an essential folding chaperone for TAPBP. Through TAPBP, assists the dynamic assembly of the MHC I complex with high affinity antigens in the endoplasmic reticulum. Therefore, plays a crucial role in the presentation of antigens to cytotoxic T cells in adaptive immunity. The chain is Protein disulfide-isomerase A3 from Homo sapiens (Human).